The sequence spans 266 residues: 3-methyl-2-oxobutanoate hydroxymethyltransferase 2 (266 aa).

Mg(2+) is bound by residues D45 and D84. Residues 45–46 (DS), D84, and K112 each bind 3-methyl-2-oxobutanoate. E114 contributes to the Mg(2+) binding site. The active-site Proton acceptor is E181.

It belongs to the PanB family. In terms of assembly, homodecamer; pentamer of dimers. The cofactor is Mg(2+).

The protein localises to the cytoplasm. The enzyme catalyses 3-methyl-2-oxobutanoate + (6R)-5,10-methylene-5,6,7,8-tetrahydrofolate + H2O = 2-dehydropantoate + (6S)-5,6,7,8-tetrahydrofolate. Its pathway is cofactor biosynthesis; (R)-pantothenate biosynthesis; (R)-pantoate from 3-methyl-2-oxobutanoate: step 1/2. In terms of biological role, catalyzes the reversible reaction in which hydroxymethyl group from 5,10-methylenetetrahydrofolate is transferred onto alpha-ketoisovalerate to form ketopantoate. The polypeptide is 3-methyl-2-oxobutanoate hydroxymethyltransferase 2 (Pseudomonas aeruginosa (strain ATCC 15692 / DSM 22644 / CIP 104116 / JCM 14847 / LMG 12228 / 1C / PRS 101 / PAO1)).